The primary structure comprises 344 residues: tRNA N6-adenosine threonylcarbamoyltransferase (344 aa).

Fe cation contacts are provided by His111 and His115. Residues 134–138, Asp167, Gly180, and Asn274 each bind substrate; that span reads LVSGG. Position 302 (Asp302) interacts with Fe cation.

This sequence belongs to the KAE1 / TsaD family. The cofactor is Fe(2+).

Its subcellular location is the cytoplasm. The catalysed reaction is L-threonylcarbamoyladenylate + adenosine(37) in tRNA = N(6)-L-threonylcarbamoyladenosine(37) in tRNA + AMP + H(+). Functionally, required for the formation of a threonylcarbamoyl group on adenosine at position 37 (t(6)A37) in tRNAs that read codons beginning with adenine. Is involved in the transfer of the threonylcarbamoyl moiety of threonylcarbamoyl-AMP (TC-AMP) to the N6 group of A37, together with TsaE and TsaB. TsaD likely plays a direct catalytic role in this reaction. The polypeptide is tRNA N6-adenosine threonylcarbamoyltransferase (Dechloromonas aromatica (strain RCB)).